Here is a 195-residue protein sequence, read N- to C-terminus: Large ribosomal subunit protein uL18 (195 aa).

Belongs to the universal ribosomal protein uL18 family. As to quaternary structure, part of the 50S ribosomal subunit. Contacts the 5S and 23S rRNAs.

Its function is as follows. This is one of the proteins that bind and probably mediate the attachment of the 5S RNA into the large ribosomal subunit, where it forms part of the central protuberance. This chain is Large ribosomal subunit protein uL18, found in Methanococcus vannielii.